The sequence spans 104 residues: Large ribosomal subunit protein bL21 (104 aa).

The protein belongs to the bacterial ribosomal protein bL21 family. As to quaternary structure, part of the 50S ribosomal subunit. Contacts protein L20.

Its function is as follows. This protein binds to 23S rRNA in the presence of protein L20. This chain is Large ribosomal subunit protein bL21, found in Tropheryma whipplei (strain TW08/27) (Whipple's bacillus).